A 499-amino-acid chain; its full sequence is Ribulose bisphosphate carboxylase large chain (499 aa).

The substrate site is built by asparagine 139 and threonine 189. The active-site Proton acceptor is the lysine 191. Lysine 193 is a substrate binding site. Mg(2+) contacts are provided by lysine 217, aspartate 219, and glutamate 220. Residue lysine 217 is modified to N6-carboxylysine. Residue histidine 309 is the Proton acceptor of the active site. The substrate site is built by arginine 310, histidine 342, and serine 394.

It belongs to the RuBisCO large chain family. Type I subfamily. As to quaternary structure, heterohexadecamer of 8 large chains and 8 small chains. Requires Mg(2+) as cofactor.

It catalyses the reaction 2 (2R)-3-phosphoglycerate + 2 H(+) = D-ribulose 1,5-bisphosphate + CO2 + H2O. The enzyme catalyses D-ribulose 1,5-bisphosphate + O2 = 2-phosphoglycolate + (2R)-3-phosphoglycerate + 2 H(+). Functionally, ruBisCO catalyzes two reactions: the carboxylation of D-ribulose 1,5-bisphosphate, the primary event in carbon dioxide fixation, as well as the oxidative fragmentation of the pentose substrate. Both reactions occur simultaneously and in competition at the same active site. This is Ribulose bisphosphate carboxylase large chain from Paraburkholderia xenovorans (strain LB400).